Consider the following 387-residue polypeptide: Phosphoglycerate kinase (387 aa).

Substrate-binding positions include 21-23 (DLN), Arg-36, and 59-62 (HLGR). N6-acetyllysine is present on Lys-84. Substrate-binding residues include Arg-113 and Arg-146. Residues Lys-197, Glu-314, and 340–343 (GGDT) each bind ATP.

This sequence belongs to the phosphoglycerate kinase family. As to quaternary structure, monomer.

The protein localises to the cytoplasm. The enzyme catalyses (2R)-3-phosphoglycerate + ATP = (2R)-3-phospho-glyceroyl phosphate + ADP. The protein operates within carbohydrate degradation; glycolysis; pyruvate from D-glyceraldehyde 3-phosphate: step 2/5. The polypeptide is Phosphoglycerate kinase (Escherichia coli O139:H28 (strain E24377A / ETEC)).